Consider the following 71-residue polypeptide: Large ribosomal subunit protein bL31 (71 aa).

Zn(2+)-binding residues include C16, C18, C37, and C40.

Belongs to the bacterial ribosomal protein bL31 family. Type A subfamily. Part of the 50S ribosomal subunit. It depends on Zn(2+) as a cofactor.

In terms of biological role, binds the 23S rRNA. This Pseudomonas putida (strain GB-1) protein is Large ribosomal subunit protein bL31.